Consider the following 450-residue polypeptide: MSKRAYFGTDGIRGQANRHPMTAEVALRVGMAAGKLFMSKDDRRHLVVIGKDTRLSGYMIEPALVAGFTSVGMDVRLFGPLPTPGVAMMTRSLRADLGVMISASHNHFADNGIKLFGPDGYKLSDEKELEIEALMDQGLQEGLATPDKLGRVQRIDDCQARYVEIAKATFPKGLSLAGMRIVIDCANGAAYKVAPETLYELGAEVIRVGVEPNGFNINEECGSTHPAAMSRLVKEYRADIGIALDGDADRLVICDEKGQVVDGDQIMALIADSWAKAGRLQGGGVVATVMSNLGLERFLKARNLKLERTQVGDRYVMARMREGGFNVGGEQSGHVILSDLSTTGDGLLAALQVLAVLQESDRPMSALARQFEPVPQKLENVRFGSGKPLEHDAVKKALAEAEQRLNGSGRIVVRASGTEPLIRVMAEGDDEKLVSQVVKEIVGAVKKVAA.

Residue serine 104 is the Phosphoserine intermediate of the active site. Mg(2+) is bound by residues serine 104, aspartate 245, aspartate 247, and aspartate 249. At serine 104 the chain carries Phosphoserine.

This sequence belongs to the phosphohexose mutase family. The cofactor is Mg(2+). Post-translationally, activated by phosphorylation.

The catalysed reaction is alpha-D-glucosamine 1-phosphate = D-glucosamine 6-phosphate. In terms of biological role, catalyzes the conversion of glucosamine-6-phosphate to glucosamine-1-phosphate. The protein is Phosphoglucosamine mutase of Phenylobacterium zucineum (strain HLK1).